The chain runs to 109 residues: uncharacterized protein (109 aa).

This is an uncharacterized protein from Autographa californica nuclear polyhedrosis virus (AcMNPV).